Reading from the N-terminus, the 618-residue chain is Proline--tRNA ligase (618 aa).

Belongs to the class-II aminoacyl-tRNA synthetase family. ProS type 1 subfamily. In terms of assembly, homodimer.

Its subcellular location is the cytoplasm. The catalysed reaction is tRNA(Pro) + L-proline + ATP = L-prolyl-tRNA(Pro) + AMP + diphosphate. In terms of biological role, catalyzes the attachment of proline to tRNA(Pro) in a two-step reaction: proline is first activated by ATP to form Pro-AMP and then transferred to the acceptor end of tRNA(Pro). As ProRS can inadvertently accommodate and process non-cognate amino acids such as alanine and cysteine, to avoid such errors it has two additional distinct editing activities against alanine. One activity is designated as 'pretransfer' editing and involves the tRNA(Pro)-independent hydrolysis of activated Ala-AMP. The other activity is designated 'posttransfer' editing and involves deacylation of mischarged Ala-tRNA(Pro). The misacylated Cys-tRNA(Pro) is not edited by ProRS. In Streptococcus pyogenes serotype M3 (strain ATCC BAA-595 / MGAS315), this protein is Proline--tRNA ligase.